A 154-amino-acid chain; its full sequence is Transcriptional repressor NrdR (154 aa).

The segment at 3 to 34 (CPFCNHGELKVIDSRNAPESNAIKRRRECLRC) is a zinc-finger region. An ATP-cone domain is found at 48–138 (VQVLKRDGRY…VYRRFKDVGE (91 aa)).

This sequence belongs to the NrdR family. Zn(2+) is required as a cofactor.

Functionally, negatively regulates transcription of bacterial ribonucleotide reductase nrd genes and operons by binding to NrdR-boxes. The chain is Transcriptional repressor NrdR from Chlamydia trachomatis serovar L2 (strain ATCC VR-902B / DSM 19102 / 434/Bu).